The chain runs to 226 residues: uncharacterized protein (226 aa).

The HTH arsR-type domain maps to 1–92 (MNPNIAKISS…QLLHIAPKAK (92 aa)). Residues 32 to 55 (AGELAYLANIKPQTASFHLNKLLE) constitute a DNA-binding region (H-T-H motif).

This is an uncharacterized protein from Bacillus subtilis (strain 168).